Consider the following 290-residue polypeptide: Sodium/potassium-transporting ATPase subunit beta-2 (290 aa).

The Cytoplasmic portion of the chain corresponds to 1 to 39; that stretch reads MVIQKEKKSCGQVVEEWKEFVWNPRTHQFMGRTGTSWAF. A helical; Signal-anchor for type II membrane protein membrane pass occupies residues 40 to 67; sequence ILLFYLVFYGFLTAMFTLTMWVMLQTVS. At 68 to 290 the chain is on the extracellular side; sequence DHTPKYQDRL…VAFKLRINKT (223 aa). N-linked (GlcNAc...) asparagine glycans are attached at residues Asn-96 and Asn-118. Residues Cys-129 and Cys-150 are joined by a disulfide bond. Asn-153 and Asn-159 each carry an N-linked (GlcNAc...) asparagine glycan. Cys-160 and Cys-177 form a disulfide bridge. Asn-193, Asn-197, and Asn-238 each carry an N-linked (GlcNAc...) asparagine glycan. Residues 193–290 are immunoglobulin-like; that stretch reads NQSMNVTCAG…VAFKLRINKT (98 aa). Cysteines 200 and 261 form a disulfide.

The protein belongs to the X(+)/potassium ATPases subunit beta family. As to quaternary structure, the sodium/potassium-transporting ATPase is composed of a catalytic alpha subunit, an auxiliary non-catalytic beta subunit and an additional regulatory subunit. Interacts with BSG.

It is found in the cell membrane. Functionally, this is the non-catalytic component of the active enzyme, which catalyzes the hydrolysis of ATP coupled with the exchange of Na(+) and K(+) ions across the plasma membrane. The exact function of the beta-2 subunit is not known. Mediates cell adhesion of neurons and astrocytes, and promotes neurite outgrowth. The protein is Sodium/potassium-transporting ATPase subunit beta-2 (ATP1B2) of Ochotona curzoniae (Black-lipped pika).